We begin with the raw amino-acid sequence, 411 residues long: Serine/threonine transporter SstT (411 aa).

The next 8 helical transmembrane spans lie at 17–37, 41–61, 79–99, 138–158, 189–209, 214–234, 295–315, and 327–347; these read IMVG…TASA, LGAL…LVLV, ILFL…VVSF, ALIS…GLAL, LGIF…ALWG, LVVL…LIVF, MAGA…TLGI, and VVAA…LLLI.

Belongs to the dicarboxylate/amino acid:cation symporter (DAACS) (TC 2.A.23) family.

The protein resides in the cell inner membrane. It catalyses the reaction L-serine(in) + Na(+)(in) = L-serine(out) + Na(+)(out). It carries out the reaction L-threonine(in) + Na(+)(in) = L-threonine(out) + Na(+)(out). Its function is as follows. Involved in the import of serine and threonine into the cell, with the concomitant import of sodium (symport system). The protein is Serine/threonine transporter SstT of Serratia proteamaculans (strain 568).